The primary structure comprises 289 residues: Diaminopimelate epimerase (289 aa).

Substrate is bound by residues asparagine 13, glutamine 47, and asparagine 67. Cysteine 76 (proton donor) is an active-site residue. Residues 77–78 (GN), asparagine 167, asparagine 200, and 218–219 (ER) contribute to the substrate site. Residue cysteine 227 is the Proton acceptor of the active site. 228-229 (GT) provides a ligand contact to substrate.

Belongs to the diaminopimelate epimerase family. In terms of assembly, homodimer.

It localises to the cytoplasm. It catalyses the reaction (2S,6S)-2,6-diaminopimelate = meso-2,6-diaminopimelate. It functions in the pathway amino-acid biosynthesis; L-lysine biosynthesis via DAP pathway; DL-2,6-diaminopimelate from LL-2,6-diaminopimelate: step 1/1. Catalyzes the stereoinversion of LL-2,6-diaminopimelate (L,L-DAP) to meso-diaminopimelate (meso-DAP), a precursor of L-lysine and an essential component of the bacterial peptidoglycan. In Burkholderia thailandensis (strain ATCC 700388 / DSM 13276 / CCUG 48851 / CIP 106301 / E264), this protein is Diaminopimelate epimerase.